We begin with the raw amino-acid sequence, 144 residues long: Large ribosomal subunit protein uL15 (144 aa).

Residues 1–48 form a disordered region; it reads MIKLESLQDPSPRKRRTKLLGRGPSSGHGKTSCRGHKGDGSRSGYKRR.

The protein belongs to the universal ribosomal protein uL15 family. As to quaternary structure, part of the 50S ribosomal subunit.

Functionally, binds to the 23S rRNA. The protein is Large ribosomal subunit protein uL15 of Chlamydia caviae (strain ATCC VR-813 / DSM 19441 / 03DC25 / GPIC) (Chlamydophila caviae).